Reading from the N-terminus, the 427-residue chain is Peptidase B (427 aa).

Lys195 and Asp200 together coordinate Mn(2+). Lys207 is a catalytic residue. Positions 218, 277, and 279 each coordinate Mn(2+). Arg281 is an active-site residue.

This sequence belongs to the peptidase M17 family. Homohexamer. Mn(2+) is required as a cofactor.

It is found in the cytoplasm. It catalyses the reaction Release of an N-terminal amino acid, Xaa, from a peptide or arylamide. Xaa is preferably Glu or Asp but may be other amino acids, including Leu, Met, His, Cys and Gln.. Its function is as follows. Probably plays an important role in intracellular peptide degradation. This Escherichia coli O127:H6 (strain E2348/69 / EPEC) protein is Peptidase B.